Consider the following 161-residue polypeptide: Lipoprotein signal peptidase (161 aa).

Transmembrane regions (helical) follow at residues 8-28 (LKYF…KYLA), 40-60 (ITSF…SLLS), 67-87 (QMIM…YLII), and 91-111 (ITEK…LGNF). Catalysis depends on residues Asp122 and Asp140. A helical transmembrane segment spans residues 136–156 (FNIADSAITCGVVILIAASLF).

Belongs to the peptidase A8 family.

It is found in the cell inner membrane. It carries out the reaction Release of signal peptides from bacterial membrane prolipoproteins. Hydrolyzes -Xaa-Yaa-Zaa-|-(S,diacylglyceryl)Cys-, in which Xaa is hydrophobic (preferably Leu), and Yaa (Ala or Ser) and Zaa (Gly or Ala) have small, neutral side chains.. The protein operates within protein modification; lipoprotein biosynthesis (signal peptide cleavage). Its function is as follows. This protein specifically catalyzes the removal of signal peptides from prolipoproteins. The polypeptide is Lipoprotein signal peptidase (Francisella tularensis subsp. tularensis (strain FSC 198)).